We begin with the raw amino-acid sequence, 497 residues long: Meiosis-specific serine/threonine-protein kinase MEK1 (497 aa).

The 56-residue stretch at 47–102 (VKVGRNDKECQLVLTNPSISSVHCVFWCVFFDEDSIPMFYVKDCSLNGTYLNGLLL) folds into the FHA domain. The 283-residue stretch at 162 to 444 (EITNRIVGNG…SKQGLKHIWI (283 aa)) folds into the Protein kinase domain. Residues 168 to 176 (VGNGTFGHV) and lysine 199 contribute to the ATP site. Aspartate 290 (proton acceptor) is an active-site residue.

It belongs to the protein kinase superfamily. CAMK Ser/Thr protein kinase family. CHEK2 subfamily.

The enzyme catalyses L-seryl-[protein] + ATP = O-phospho-L-seryl-[protein] + ADP + H(+). It carries out the reaction L-threonyl-[protein] + ATP = O-phospho-L-threonyl-[protein] + ADP + H(+). Functionally, probable protein kinase required for meiotic recombination. The sequence is that of Meiosis-specific serine/threonine-protein kinase MEK1 (MEK1) from Saccharomyces cerevisiae (strain ATCC 204508 / S288c) (Baker's yeast).